The chain runs to 67 residues: MNLKLALVLLLTVINVGMLPGATSNGNIKTDIKCYRNSHCNFHCEKSYYCQGSKCVRKRCNCYNCPL.

The first 24 residues, 1–24, serve as a signal peptide directing secretion; sequence MNLKLALVLLLTVINVGMLPGATS. 4 disulfide bridges follow: Cys34-Cys55, Cys40-Cys60, Cys44-Cys62, and Cys50-Cys65.

Belongs to the short scorpion toxin superfamily. Potassium channel inhibitor family. Alpha-KTx 06 subfamily. In terms of tissue distribution, expressed by the venom gland.

It is found in the secreted. Its function is as follows. Inhibits voltage-gated potassium channels. The chain is Potassium channel toxin alpha-KTx 6.16 from Opisthacanthus cayaporum (South American scorpion).